We begin with the raw amino-acid sequence, 359 residues long: Peptide chain release factor 1 (359 aa).

Gln-236 carries the post-translational modification N5-methylglutamine.

It belongs to the prokaryotic/mitochondrial release factor family. Methylated by PrmC. Methylation increases the termination efficiency of RF1.

It localises to the cytoplasm. Peptide chain release factor 1 directs the termination of translation in response to the peptide chain termination codons UAG and UAA. This chain is Peptide chain release factor 1, found in Streptococcus pyogenes serotype M1.